The primary structure comprises 240 residues: Putative truncated effector protein hopW1-2 (240 aa).

The disordered stretch occupies residues 1–32 (MSPAQIIRTSHSFPPSFTGTSSSAENSHAQSP). The span at 9-23 (TSHSFPPSFTGTSSS) shows a compositional bias: low complexity.

This sequence belongs to the HopW family.

This is Putative truncated effector protein hopW1-2 (hopW1-2) from Pseudomonas syringae pv. maculicola.